The sequence spans 381 residues: Alkanesulfonate monooxygenase (381 aa).

Belongs to the SsuD family. Homotetramer.

The enzyme catalyses an alkanesulfonate + FMNH2 + O2 = an aldehyde + FMN + sulfite + H2O + 2 H(+). Functionally, catalyzes the desulfonation of aliphatic sulfonates. The protein is Alkanesulfonate monooxygenase of Escherichia coli O157:H7.